A 505-amino-acid polypeptide reads, in one-letter code: Deoxyguanosinetriphosphate triphosphohydrolase (505 aa).

The 208-residue stretch at 66–273 (RLTHSMEVQQ…MEAADDISYC (208 aa)) folds into the HD domain.

This sequence belongs to the dGTPase family. Type 1 subfamily. Homotetramer. Mg(2+) is required as a cofactor.

The enzyme catalyses dGTP + H2O = 2'-deoxyguanosine + triphosphate + H(+). In terms of biological role, dGTPase preferentially hydrolyzes dGTP over the other canonical NTPs. The chain is Deoxyguanosinetriphosphate triphosphohydrolase from Escherichia coli (strain K12 / MC4100 / BW2952).